A 610-amino-acid polypeptide reads, in one-letter code: Chaperone protein DnaK (610 aa).

Thr-173 carries the phosphothreonine; by autocatalysis modification. Over residues 579–592 the composition is skewed to low complexity; that stretch reads QQQQAQGANAGQNN. Positions 579-610 are disordered; it reads QQQQAQGANAGQNNDSTVEDAEFKEVKDDDKK. Positions 599–610 are enriched in basic and acidic residues; that stretch reads AEFKEVKDDDKK.

This sequence belongs to the heat shock protein 70 family.

In terms of biological role, acts as a chaperone. In Staphylococcus aureus (strain bovine RF122 / ET3-1), this protein is Chaperone protein DnaK.